The following is a 590-amino-acid chain: Negative elongation factor D (590 aa).

The disordered stretch occupies residues 15-43 (YGSAAEWGDEADGGQQEDDSGEGEDDAEV). Residues 21–43 (WGDEADGGQQEDDSGEGEDDAEV) show a composition bias toward acidic residues.

Belongs to the NELF-D family. As to quaternary structure, the NELF complex is composed of NELFA, NELFB, NELFCD and NELFE; NELFA and NELFCD form a stable subcomplex that binds primarily through NELFCD to the N-terminus of NELFB. Binds RNA which may help to stabilize the NELF complex on nucleic acid. In vitro, the NELFA:NELFCD subcomplex binds to ssDNA and ssRNA in a sequence- and structure-dependent manner. Interacts with ARAF1. Interacts with PCF11. Interacts with NELFB. Interacts with KAT8.

It localises to the nucleus. Functionally, essential component of the NELF complex, a complex that negatively regulates the elongation of transcription by RNA polymerase II. The NELF complex, which acts via an association with the DSIF complex and causes transcriptional pausing, is counteracted by the P-TEFb kinase complex. The chain is Negative elongation factor D (NELFCD) from Pongo abelii (Sumatran orangutan).